Reading from the N-terminus, the 211-residue chain is ATP phosphoribosyltransferase (211 aa).

This sequence belongs to the ATP phosphoribosyltransferase family. Short subfamily. In terms of assembly, heteromultimer composed of HisG and HisZ subunits.

It is found in the cytoplasm. It catalyses the reaction 1-(5-phospho-beta-D-ribosyl)-ATP + diphosphate = 5-phospho-alpha-D-ribose 1-diphosphate + ATP. Its pathway is amino-acid biosynthesis; L-histidine biosynthesis; L-histidine from 5-phospho-alpha-D-ribose 1-diphosphate: step 1/9. In terms of biological role, catalyzes the condensation of ATP and 5-phosphoribose 1-diphosphate to form N'-(5'-phosphoribosyl)-ATP (PR-ATP). Has a crucial role in the pathway because the rate of histidine biosynthesis seems to be controlled primarily by regulation of HisG enzymatic activity. In Pseudomonas syringae pv. syringae (strain B728a), this protein is ATP phosphoribosyltransferase.